The following is a 325-amino-acid chain: Homeobox protein Hox-A1a (325 aa).

The short motif at 187–192 is the Antp-type hexapeptide element; that stretch reads TFDWMK. Disordered regions lie at residues 194–215 and 264–325; these read KRNP…PNTV and RMKQ…YPSN. Residues 212-271 constitute a DNA-binding region (homeobox); sequence PNTVRTNFTTKQLTELEKEFHFNKYLTRARRVEIAAALQLNETQVKIWFQNRRMKQKKRE. Over residues 285–300 the composition is skewed to basic and acidic residues; it reads SGERNQEKVEDGESEK. Positions 301 to 317 are enriched in low complexity; the sequence is SVSAPSTPSPTSSTVSS.

Belongs to the Antp homeobox family. Labial subfamily.

The protein resides in the nucleus. Its function is as follows. Sequence-specific transcription factor which is part of a developmental regulatory system that provides cells with specific positional identities on the anterior-posterior axis. The chain is Homeobox protein Hox-A1a (hoxa1a) from Takifugu rubripes (Japanese pufferfish).